Here is a 158-residue protein sequence, read N- to C-terminus: MAEENKNNENFQYIVRIANKDLNGERPLKLALADLKGIGLRLSETIAKKLDLDPDQRIGELGEDKIEELRKYIEGKVYDGIPYWMYNHRRDITTGKDFNLVSNDLDLQINDDINLMKKMRSYKGIRHERGLKVRGQRMRSNGRKGLAIGVVRKKEEKK.

It belongs to the universal ribosomal protein uS13 family. As to quaternary structure, part of the 30S ribosomal subunit. Forms a loose heterodimer with protein S19. Forms two bridges to the 50S subunit in the 70S ribosome.

In terms of biological role, located at the top of the head of the 30S subunit, it contacts several helices of the 16S rRNA. In the 70S ribosome it contacts the 23S rRNA (bridge B1a) and protein L5 of the 50S subunit (bridge B1b), connecting the 2 subunits; these bridges are implicated in subunit movement. This chain is Small ribosomal subunit protein uS13, found in Picrophilus torridus (strain ATCC 700027 / DSM 9790 / JCM 10055 / NBRC 100828 / KAW 2/3).